The sequence spans 404 residues: Odorant receptor 67c (404 aa).

The Cytoplasmic segment spans residues 1–45 (METAKDNTARTFMELMRVPVQFYRTIGEDIYAHRSTNPLKSLLFK). A helical transmembrane segment spans residues 46–66 (IYLYAGFINFNLLVIGELVFF). Residues 67 to 79 (YNSIQDFETIRLA) are Extracellular-facing. A helical membrane pass occupies residues 80-100 (IAVAPCIGFSLVADFKQAAMI). Residues 101–139 (RGKKTLIMLLDDLENMHPKTLAKQMEYKLPDFEKTMKRV) are Cytoplasmic-facing. A helical membrane pass occupies residues 140–160 (INIFTFLCLAYTTTFSFYPAI). The Extracellular portion of the chain corresponds to 161 to 204 (KASVKFNFLGYDTFDRNFGFLIWFPFDATRNNLIYWIMYWDIAH). A helical transmembrane segment spans residues 205–225 (GAYLAGIAFLCADLLLVVVIT). Residues 226–277 (QICMHFNYISMRLEDHPCNSNEDKENIEFLIGIIRYHDKCLKLCEHVNDLYS) are Cytoplasmic-facing. Residues 278–298 (FSLLLNFLMASMQICFIAFQV) form a helical membrane-spanning segment. The Extracellular portion of the chain corresponds to 299 to 304 (TESTVE). A helical transmembrane segment spans residues 305–326 (VIIIYCIFLMTSMVQVFMVCYY). Residues 327 to 373 (GDTLIAASLKVGDAAYNQKWFQCSKSYCTMLKLLIMRSQKPASIRPP) are Cytoplasmic-facing. A helical membrane pass occupies residues 374 to 394 (TFPPISLVTYMKVISMSYQFF). The Extracellular segment spans residues 395-404 (ALLRTTYSNN).

It belongs to the insect chemoreceptor superfamily. Heteromeric odorant receptor channel (TC 1.A.69) family. Or49a subfamily. In terms of assembly, interacts with Orco. Complexes exist early in the endomembrane system in olfactory sensory neurons (OSNs), coupling these complexes to the conserved ciliary trafficking pathway. Expressed in olfactory sensory neurons in the antenna.

It localises to the cell membrane. Its function is as follows. Odorant receptor which mediates acceptance or avoidance behavior, depending on its substrates. The odorant receptor repertoire encodes a large collection of odor stimuli that vary widely in identity, intensity, and duration. May form a complex with Orco to form odorant-sensing units, providing sensitive and prolonged odorant signaling and calcium permeability. This Drosophila melanogaster (Fruit fly) protein is Odorant receptor 67c (Or67c).